The primary structure comprises 397 residues: MYSLIEAQLLGGKLVNRVMASLRRIIQRSLGYFCALNGILDFNTDIGTGNLRRYRVLFMYRLLHNFAVISLTLKFLFDFTDHFKYIESSTLITVNFFTYFTLVFFALLSSMGSCYQWQNRILAVLKELKHQRDLSRHMGYRVPRSKQNSIDYLLFALTVLLILRLSIHLATFTLSARMGFNHPCNCFLPECMIFSMNYLLFAILAEITRCWWSLQSGLKMVLLNRQLSTVAFNLWEIERLHTRFQCLIDLTSEVCSIFRYVTLAYMARNLWSGIVAGYLLVRFVIGNGLQDVELVYLVFSFITCIQPLMLSLLVNSMTSTTGSLVEVTRDILKISHKKSVNLERSIEWLSLQLTWQHTHVTIFGVFRINRSLAFRSASLILVHVLYMVQSDYISITN.

Residues 1 to 56 (MYSLIEAQLLGGKLVNRVMASLRRIIQRSLGYFCALNGILDFNTDIGTGNLRRYRV) are Cytoplasmic-facing. A helical transmembrane segment spans residues 57–77 (LFMYRLLHNFAVISLTLKFLF). The Extracellular segment spans residues 78–90 (DFTDHFKYIESST). Residues 91-111 (LITVNFFTYFTLVFFALLSSM) form a helical membrane-spanning segment. Residues 112 to 151 (GSCYQWQNRILAVLKELKHQRDLSRHMGYRVPRSKQNSID) lie on the Cytoplasmic side of the membrane. A helical membrane pass occupies residues 152–172 (YLLFALTVLLILRLSIHLATF). The Extracellular portion of the chain corresponds to 173–186 (TLSARMGFNHPCNC). Residues 187-207 (FLPECMIFSMNYLLFAILAEI) traverse the membrane as a helical segment. Topologically, residues 208–268 (TRCWWSLQSG…RYVTLAYMAR (61 aa)) are cytoplasmic. The helical transmembrane segment at 269–289 (NLWSGIVAGYLLVRFVIGNGL) threads the bilayer. Residues 290 to 293 (QDVE) are Extracellular-facing. A helical transmembrane segment spans residues 294–314 (LVYLVFSFITCIQPLMLSLLV). Residues 315–375 (NSMTSTTGSL…FRINRSLAFR (61 aa)) lie on the Cytoplasmic side of the membrane. The chain crosses the membrane as a helical span at residues 376-396 (SASLILVHVLYMVQSDYISIT). Residue N397 is a topological domain, extracellular.

The protein belongs to the insect chemoreceptor superfamily. Gustatory receptor (GR) family. Gr22e subfamily.

It is found in the cell membrane. In terms of biological role, probable gustatory receptor which mediates acceptance or avoidance behavior, depending on its substrates. In Drosophila melanogaster (Fruit fly), this protein is Putative gustatory receptor 85a (Gr85a).